A 172-amino-acid chain; its full sequence is HTH-type transcriptional regulator IscR (172 aa).

Residues 2 to 131 (RLTSKGRYAV…NNITLGELMR (130 aa)) enclose the HTH rrf2-type domain. The segment at residues 28–51 (LADISERQGISLSYLEQLFSRLRK) is a DNA-binding region (H-T-H motif). The [2Fe-2S] cluster site is built by Cys92, Cys98, and Cys104.

Requires [2Fe-2S] cluster as cofactor.

Its function is as follows. Regulates the transcription of several operons and genes involved in the biogenesis of Fe-S clusters and Fe-S-containing proteins. The protein is HTH-type transcriptional regulator IscR of Photobacterium profundum (strain SS9).